The primary structure comprises 921 residues: Collagen alpha-1(IX) chain (921 aa).

A signal peptide spans 1–23 (MKNFWKISVFFCVCSCLGPWVSA). The segment at 24–268 (TLKRRARFPA…ITTSQTTDER (245 aa)) is nonhelical region (NC4). Cystine bridges form between Cys44-Cys242 and Cys198-Cys252. The Laminin G-like domain maps to 50 to 244 (GQDDLPGFDL…LQWMLIHCDP (195 aa)). Zn(2+) contacts are provided by Asp213, Asp215, and His253. 2 disordered regions span residues 253-759 (HELP…APTD) and 783-921 (RPDT…GPDK). Collagen-like domains follow at residues 269 to 325 (GPPG…PGAD), 326 to 356 (GLTG…GFPG), 358 to 403 (GIPG…GTIG), 416 to 472 (PPGR…GLRG), 473 to 512 (ITGI…PPGE), 604 to 656 (GKPG…LPGP), 657 to 711 (PGLP…PGEP), and 712 to 755 (GLRG…PPGR). A triple-helical region (COL3) region spans residues 269-405 (GPPGEQGPPG…PGPSGTIGFH (137 aa)). Pro residues-rich tracts occupy residues 273–285 (EQGP…PPGV) and 298–310 (KGPP…PGDP). The segment covering 368 to 383 (TTGLPGELGRVGPIGD) has biased composition (low complexity). Over residues 387–398 (RGPPGPPGPPGP) the composition is skewed to pro residues. The nonhelical region (NC3) stretch occupies residues 406 to 417 (DGDPLCPNSCPP). The triple-helical region (COL2) stretch occupies residues 418 to 756 (GRSGYPGLPG…PGIQGPPGRA (339 aa)). Residues 479-489 (DKGEKGARGFD) show a composition bias toward basic and acidic residues. Composition is skewed to low complexity over residues 594 to 632 (PGKP…PVGP) and 639 to 650 (PGKLGSVGSPGL). Positions 757 to 786 (PTDQHIKQVCMRVVQEHFVEMAASLKRPDT) are nonhelical region (NC2). Positions 787-901 (GASGLPGRPG…PGPPGPPGFC (115 aa)) are triple-helical region (COL1). Positions 790-847 (GLPGRPGPPGPPGPPGENGFPGQMGIRGLPGIKGPPGALGLRGPKGDLGEKGERGPPG) constitute a Collagen-like 9 domain. The span at 794 to 804 (RPGPPGPPGPP) shows a compositional bias: pro residues. A compositionally biased stretch (basic and acidic residues) spans 833–845 (PKGDLGEKGERGP). Over residues 888–900 (VPGPPGPPGPPGF) the composition is skewed to pro residues. The interval 902-921 (EPASCTLQSGQRAFSKGPDK) is nonhelical region (NC1).

This sequence belongs to the fibril-associated collagens with interrupted helices (FACIT) family. Heterotrimer of an alpha 1(IX), an alpha 2(IX) and an alpha 3(IX) chain. Covalently linked to the telopeptides of type II collagen by lysine-derived cross-links. Post-translationally, prolines at the third position of the tripeptide repeating unit (G-X-Y) are hydroxylated in some or all of the chains.

It localises to the secreted. It is found in the extracellular space. The protein localises to the extracellular matrix. In terms of biological role, structural component of hyaline cartilage and vitreous of the eye. The protein is Collagen alpha-1(IX) chain (Col9a1) of Mus musculus (Mouse).